The chain runs to 106 residues: Ig kappa-b4 chain C region (106 aa).

One can recognise an Ig-like domain in the interval 6–99 (PSVLLFPPSK…VQGSASPIVQ (94 aa)). Residues Cys-27 and Cys-87 are joined by a disulfide bond. Polar residues predominate over residues 48 to 64 (QQSGIENSKTPQSPEDN). Residues 48–67 (QQSGIENSKTPQSPEDNTYS) are disordered.

This Oryctolagus cuniculus (Rabbit) protein is Ig kappa-b4 chain C region (K-BAS).